Consider the following 537-residue polypeptide: Frizzled-4 (537 aa).

The N-terminal stretch at methionine 1 to glycine 36 is a signal peptide. Residues phenylalanine 37 to serine 212 lie on the Extracellular side of the membrane. One can recognise an FZ domain in the interval glutamate 40 to glycine 161. 8 disulfide bridges follow: cysteine 45-cysteine 106, cysteine 53-cysteine 99, cysteine 90-cysteine 128, cysteine 117-cysteine 158, cysteine 121-cysteine 145, cysteine 181-cysteine 200, cysteine 204-cysteine 282, and cysteine 302-cysteine 377. Residue asparagine 59 is glycosylated (N-linked (GlcNAc...) asparagine). N-linked (GlcNAc...) asparagine glycosylation is present at asparagine 144. Residues arginine 213–isoleucine 243 traverse the membrane as a helical segment. Residues aspartate 244–serine 249 lie on the Cytoplasmic side of the membrane. The chain crosses the membrane as a helical span at residues tyrosine 250 to valine 275. Topologically, residues glycine 276–asparagine 299 are extracellular. The chain crosses the membrane as a helical span at residues threonine 300–leucine 333. At lysine 334–glycine 336 the chain is on the cytoplasmic side. A helical membrane pass occupies residues histidine 337 to methionine 365. Residues arginine 366–asparagine 383 are Extracellular-facing. Residues leucine 384–leucine 410 traverse the membrane as a helical segment. Topologically, residues valine 411–glutamate 431 are cytoplasmic. The helical transmembrane segment at arginine 432–serine 460 threads the bilayer. Residues asparagine 461–asparagine 473 lie on the Extracellular side of the membrane. Residues methionine 474–isoleucine 495 traverse the membrane as a helical segment. The Cytoplasmic portion of the chain corresponds to tryptophan 496–valine 537. Positions lysine 499 to tryptophan 504 match the Lys-Thr-X-X-X-Trp motif, mediates interaction with the PDZ domain of Dvl family members motif. The short motif at threonine 535 to valine 537 is the PDZ-binding element.

It belongs to the G-protein coupled receptor Fz/Smo family. In terms of assembly, interacts with MAGI3 and NDP. Component of a complex, at least composed of TSPAN12, FZD4 and norrin (NDP). Interacts (via FZ domain) with TSKU; TSKU competes with WNT2B for binding to FZD4, inhibiting Wnt signaling and repressing peripheral eye development. Interacts with glypican GPC3. Post-translationally, ubiquitinated by ZNRF3, leading to its degradation by the proteasome. In terms of tissue distribution, expressed in chondrocytes.

The protein localises to the cell membrane. Receptor for Wnt proteins. Most frizzled receptors are coupled to the beta-catenin (CTNNB1) canonical signaling pathway, which leads to the activation of disheveled proteins, inhibition of GSK-3 kinase, nuclear accumulation of beta-catenin (CTNNB1) and activation of Wnt target genes. Plays a critical role in retinal vascularization by acting as a receptor for Wnt proteins and norrin (NDP). In retina, it can be activated by Wnt protein-binding and also by Wnt-independent signaling via binding of norrin (NDP), promoting in both cases beta-catenin (CTNNB1) accumulation and stimulation of LEF/TCF-mediated transcriptional programs. A second signaling pathway involving PKC and calcium fluxes has been seen for some family members, but it is not yet clear if it represents a distinct pathway or if it can be integrated in the canonical pathway, as PKC seems to be required for Wnt-mediated inactivation of GSK-3 kinase. Both pathways seem to involve interactions with G-proteins. May be involved in transduction and intercellular transmission of polarity information during tissue morphogenesis and/or in differentiated tissues. Activation by Wnt5A stimulates PKC activity via a G-protein-dependent mechanism. The chain is Frizzled-4 (Fzd4) from Mus musculus (Mouse).